Reading from the N-terminus, the 309-residue chain is Porphobilinogen deaminase (309 aa).

At Cys242 the chain carries S-(dipyrrolylmethanemethyl)cysteine.

This sequence belongs to the HMBS family. As to quaternary structure, monomer. It depends on dipyrromethane as a cofactor.

The enzyme catalyses 4 porphobilinogen + H2O = hydroxymethylbilane + 4 NH4(+). The protein operates within porphyrin-containing compound metabolism; protoporphyrin-IX biosynthesis; coproporphyrinogen-III from 5-aminolevulinate: step 2/4. Tetrapolymerization of the monopyrrole PBG into the hydroxymethylbilane pre-uroporphyrinogen in several discrete steps. The chain is Porphobilinogen deaminase from Syntrophobacter fumaroxidans (strain DSM 10017 / MPOB).